Here is a 199-residue protein sequence, read N- to C-terminus: MTTLTAQQIACVYAWLAQLFSRELDDEQLTQIASAQMAEWFSLLKSEPPLTAAVDELENRVATLTVRDDARLELAADFCGLFLMTDKQAALPYASAYKQDEQEIKRLLVEAGMETSGNFNEPTDHLAIYLELLSHLHFSLGEGTVPARRIDSLRQKTLTALRQWLPEFVARCHQYDSFGFYAALSQLLLVLVEGDHQNR.

The protein belongs to the TorD/DmsD family. TorD subfamily.

The protein resides in the cytoplasm. Involved in the biogenesis of TorA. Acts on TorA before the insertion of the molybdenum cofactor and, as a result, probably favors a conformation of the apoenzyme that is competent for acquiring the cofactor. This chain is Chaperone protein TorD, found in Escherichia coli O157:H7 (strain EC4115 / EHEC).